A 504-amino-acid polypeptide reads, in one-letter code: Protein DETOXIFICATION 38 (504 aa).

12 helical membrane-spanning segments follow: residues 56–76, 90–110, 139–159, 170–190, 208–228, 234–254, 273–295, 316–336, 356–376, 401–421, 433–453, and 457–477; these read LLLRLALPAILVYLINGGMGI, LAAASIGNSSFSLVYALMLGM, IVLALVGFPMTILYTFSYPIL, YMGSLYIAGLIPQIFAYAVYF, ISAAALVLQISLTWITVYAMG, IAYVLTISWWFIVGAQTFYVI, GLWSFFKLSAGSAVMICLELWYT, SICMSISALSFMVSVGFNAAV, TWTATFVSFVISVVEALVVIA, FLAVTIILNGIQPVLSGVAVG, IGCYYIVGIPIGCILGFTFNF, and GIWTGMIGGTLMQTLILLYVT.

It belongs to the multi antimicrobial extrusion (MATE) (TC 2.A.66.1) family.

It is found in the membrane. The sequence is that of Protein DETOXIFICATION 38 from Arabidopsis thaliana (Mouse-ear cress).